A 602-amino-acid polypeptide reads, in one-letter code: Phosphoenolpyruvate carboxykinase [GTP] (602 aa).

Substrate-binding positions include Arg-89 and 211–213; that span reads YAG. The Mn(2+) site is built by Lys-220 and His-239. Ser-260 serves as a coordination point for substrate. 261-266 provides a ligand contact to GTP; it reads GSGKTS. Residue Ser-262 is part of the active site. Asp-277 contacts Mn(2+). 367 to 369 contacts substrate; the sequence is NAR. Residues Arg-369 and Arg-400 each contribute to the GTP site.

Belongs to the phosphoenolpyruvate carboxykinase [GTP] family. Requires Mn(2+) as cofactor.

Its subcellular location is the cytoplasm. The catalysed reaction is oxaloacetate + GTP = phosphoenolpyruvate + GDP + CO2. It participates in carbohydrate biosynthesis; gluconeogenesis. Functionally, catalyzes the conversion of oxaloacetate (OAA) to phosphoenolpyruvate (PEP), the rate-limiting step in the metabolic pathway that produces glucose from lactate and other precursors derived from the citric acid cycle. This Sulfurisphaera tokodaii (strain DSM 16993 / JCM 10545 / NBRC 100140 / 7) (Sulfolobus tokodaii) protein is Phosphoenolpyruvate carboxykinase [GTP].